Consider the following 434-residue polypeptide: Sensor histidine kinase Hik2 (434 aa).

One can recognise a GAF domain in the interval 16–152 (ISLCQSQVRL…EAIAKSLAVA (137 aa)). Cys-19 is a [3Fe-4S] cluster binding site. Residues 182-432 (DLLHQLRNPL…TFTLWLRSGE (251 aa)) form the Histidine kinase domain. His-185 carries the phosphohistidine; by autocatalysis modification. The G1 box signature appears at 357–361 (DTGYG). The G2 box signature appears at 386–390 (GTGLG).

This sequence belongs to the chloroplast sensor kinase protein family. As to quaternary structure, exists as monomers, tetramers, hexamers and other higher-order oligomers; all are able to autophosphorylate. Upon treatment with 0.5 M NaCl only tetramers are seen, which are probably inactive. Interacts with both RppA and Rre1. [3Fe-4S] cluster is required as a cofactor. In terms of processing, autophosphorylates, probably on His-185.

It localises to the cytoplasm. The catalysed reaction is ATP + protein L-histidine = ADP + protein N-phospho-L-histidine.. Autophosphorylation is inhibited by Na(+) but not by Cl(-). Reducing agents dithionite, duroquinol and decyl-plastoquinone, but not NADPH or ferredoxin inhibit autophosphorylation. Oxidation of the Fe-S cluster (with potassium ferricyanide) induces a conformational change that is conducive to its autophosphorylation activity. Its function is as follows. Member of possibly 2 two-component regulatory system(s) Hik2/Rre1 and Hik2/RppA. Transduces PQ (plastoquinone) redox signals to photosystem gene expression machinery during the adjustment of photosystem stoichiometry. Reduced PQ suppresses its autophosphorylation activity (i.e. kinase activity is higher under oxidizing conditions). Member of two-component regulatory system Hik2/Rre1, controls expression of sigB (sll0306), sll0528, slr1119, slr0852 and ssr3188 in response to hyperosmotic stress. Activity responds to high salt (with a linear response as concentrations rise to 0.5 M NaCl); detects Cl(-) levels. Autophosphorylates and transfers phosphate to Rre1. May transfer phosphate to RppA in a possible Hik2/RppA two-component system. The protein is Sensor histidine kinase Hik2 of Synechocystis sp. (strain ATCC 27184 / PCC 6803 / Kazusa).